The following is a 105-amino-acid chain: QPKSDPLVTLFLPSLKNLQANKVTLVCLVSEFYPGTLVVDWKVDGVPVTQGVETTQPSKQTNNKYMVSSYLTLISDQWMPHSRYSCRVTHEGNTVEKSVSPAECS.

The segment at 1–105 (QPKSDPLVTL…EKSVSPAECS (105 aa)) is c region. Residues 6 to 100 (PLVTLFLPSL…EGNTVEKSVS (95 aa)) enclose the Ig-like C1-type domain. Cys27 and Cys86 are oxidised to a cystine.

In terms of assembly, associates non-covalently with VPREB1A. Interacts with SYNV1/HRD1 (via N-terminus); this interaction leads to increased IGLL1 ubiquitination and degradation in pre-B cells, possibly through a lysosomal, not proteasomal, pathway.

The protein localises to the endoplasmic reticulum. It localises to the secreted. Functionally, critical for B-cell development. This Mus spretus (Western Mediterranean mouse) protein is Immunoglobulin lambda-like polypeptide 1 (Igll1).